A 251-amino-acid chain; its full sequence is 3-deoxy-manno-octulosonate cytidylyltransferase (251 aa).

This sequence belongs to the KdsB family.

The protein localises to the cytoplasm. The catalysed reaction is 3-deoxy-alpha-D-manno-oct-2-ulosonate + CTP = CMP-3-deoxy-beta-D-manno-octulosonate + diphosphate. The protein operates within nucleotide-sugar biosynthesis; CMP-3-deoxy-D-manno-octulosonate biosynthesis; CMP-3-deoxy-D-manno-octulosonate from 3-deoxy-D-manno-octulosonate and CTP: step 1/1. Its pathway is bacterial outer membrane biogenesis; lipopolysaccharide biosynthesis. Activates KDO (a required 8-carbon sugar) for incorporation into bacterial lipopolysaccharide in Gram-negative bacteria. This is 3-deoxy-manno-octulosonate cytidylyltransferase from Vibrio parahaemolyticus serotype O3:K6 (strain RIMD 2210633).